Reading from the N-terminus, the 920-residue chain is B3 domain-containing protein REM17 (920 aa).

DNA-binding regions (TF-B3) lie at residues 12-105 (NPHF…LGPS), 153-250 (RFVA…CRAK), and 267-361 (CFEG…LCPT). 3 disordered regions span residues 405–438 (DDDQ…SSFV), 540–562 (LACS…KNTS), and 585–614 (DDDQ…SSDH). Residues 423-432 (NPREKVESSS) are compositionally biased toward basic and acidic residues. The TF-B3 4 DNA-binding region spans 436 to 531 (SFVGSVNPSS…NKPVLSLCPT (96 aa)). 2 DNA-binding regions (TF-B3) span residues 616–714 (SFVA…SLSE) and 727–823 (YFVG…LCPA). Residues 842 to 852 (NSLSSNPSSGD) are compositionally biased toward low complexity. The tract at residues 842 to 870 (NSLSSNPSSGDDSSRSEESEEENMEDKNI) is disordered.

The protein localises to the nucleus. The chain is B3 domain-containing protein REM17 (REM17) from Arabidopsis thaliana (Mouse-ear cress).